We begin with the raw amino-acid sequence, 190 residues long: Adenine phosphoribosyltransferase (190 aa).

This sequence belongs to the purine/pyrimidine phosphoribosyltransferase family. As to quaternary structure, homodimer.

The protein localises to the cytoplasm. It carries out the reaction AMP + diphosphate = 5-phospho-alpha-D-ribose 1-diphosphate + adenine. It functions in the pathway purine metabolism; AMP biosynthesis via salvage pathway; AMP from adenine: step 1/1. Catalyzes a salvage reaction resulting in the formation of AMP, that is energically less costly than de novo synthesis. This is Adenine phosphoribosyltransferase from Cupriavidus pinatubonensis (strain JMP 134 / LMG 1197) (Cupriavidus necator (strain JMP 134)).